A 159-amino-acid polypeptide reads, in one-letter code: Defense protein l(2)34Fc (159 aa).

An N-terminal signal peptide occupies residues 1-17; the sequence is MFRLLVLAACLAISVHA. Residues 18 to 159 form the Reelin domain; that stretch reads YSDGAPKAAC…GRVTKDIDVE (142 aa). A disulfide bond links C27 and C99.

Belongs to the insect defense protein family.

The protein localises to the secreted. Functionally, may have antimicrobial activity. A late response immune regulated gene that is negatively regulated by spz during the immune response. This Drosophila melanogaster (Fruit fly) protein is Defense protein l(2)34Fc (l(2)34Fc).